We begin with the raw amino-acid sequence, 164 residues long: 17.8 kDa heat shock protein (164 aa).

The sHSP domain maps to 20 to 154 (VVAGEARPPM…HAGNGKAAGD (135 aa)). Residues 68–93 (GEHEDANNAAKAGKASGEEEEENDGV) are disordered.

This sequence belongs to the small heat shock protein (HSP20) family. May form oligomeric structures.

It is found in the cytoplasm. The sequence is that of 17.8 kDa heat shock protein (HSP17.8) from Oryza sativa subsp. japonica (Rice).